A 552-amino-acid polypeptide reads, in one-letter code: Putative transport protein APL_0966 (552 aa).

A run of 5 helical transmembrane segments spans residues 4-24 (IAIIVSLLSLVAVLGLWIGHI), 29-49 (VGLGIGGVLFGGIIISHCTHL), 65-85 (FGLILFVYSIGIQVGPGFFAS), 95-115 (GFAVMIVGLSGILVALIHKLF), and 161-181 (IAYPFGIIGILLSMWLIRIIF). RCK C-terminal domains follow at residues 190 to 275 (QEFD…ILGE) and 277 to 360 (ADVS…IIGD). Transmembrane regions (helical) follow at residues 370–390 (MLPIFVGIGLGVLLGSLPLYI), 402–424 (AGGPLVVALILARIGSIGKLYWF), 438–458 (IVLFLSVVGLKAGANFLDTLL), 463–483 (LAWMGYGAIITFIPLIVTGFV), 492–512 (YLSLCGLLSGAMTDPPALAFA), and 529–549 (VYPLVMFLRIILPQLLAILLW).

Belongs to the AAE transporter (TC 2.A.81) family. YidE subfamily.

It localises to the cell membrane. This Actinobacillus pleuropneumoniae serotype 5b (strain L20) protein is Putative transport protein APL_0966.